The sequence spans 303 residues: Acetaldehyde dehydrogenase 1 (303 aa).

Catalysis depends on cysteine 130, which acts as the Acyl-thioester intermediate. Residues 161–169 and asparagine 272 contribute to the NAD(+) site; that span reads SVGPGTRKN.

Belongs to the acetaldehyde dehydrogenase family.

It catalyses the reaction acetaldehyde + NAD(+) + CoA = acetyl-CoA + NADH + H(+). This is Acetaldehyde dehydrogenase 1 from Methylibium petroleiphilum (strain ATCC BAA-1232 / LMG 22953 / PM1).